We begin with the raw amino-acid sequence, 229 residues long: Zinc finger matrin-type protein 4 (229 aa).

Matrin-type zinc fingers lie at residues 14 to 44 and 72 to 106; these read SYCKVCSAQLISESQRVAHYESRKHASKVRL and DKNKCCTLCNMSFTSAVVADSHYQGKIHAKRLKLL. Residues 116 to 135 are disordered; sequence TATPLSPLKPPRMDTAPVVA. Matrin-type zinc fingers lie at residues 145–175 and 198–228; these read RYCGLCAAWFNNPLMAQQHYDGKKHKKNAAR and YRCTICSVSLNSIEQYHAHLKGSKHQTNLKN.

Its subcellular location is the nucleus. This chain is Zinc finger matrin-type protein 4 (ZMAT4), found in Homo sapiens (Human).